Here is a 409-residue protein sequence, read N- to C-terminus: Type II methyltransferase M.BsuFI (409 aa).

The SAM-dependent MTase C5-type domain maps to 101–402 (LTFIDLFAGI…GAMKERLLLA (302 aa)). The active site involves cysteine 170.

It belongs to the class I-like SAM-binding methyltransferase superfamily. C5-methyltransferase family.

The catalysed reaction is a 2'-deoxycytidine in DNA + S-adenosyl-L-methionine = a 5-methyl-2'-deoxycytidine in DNA + S-adenosyl-L-homocysteine + H(+). Functionally, a methylase, recognizes the double-stranded sequence 5'-CCGG-3', methylates C-1 on both strands, and protects the DNA from cleavage by the BsuFI endonuclease. The chain is Type II methyltransferase M.BsuFI (hsdFM) from Bacillus subtilis.